Reading from the N-terminus, the 430-residue chain is Tyrosine--tRNA ligase (430 aa).

Tyrosine 32 provides a ligand contact to L-tyrosine. A 'HIGH' region motif is present at residues 37 to 46 (PTADSLHIGH). The L-tyrosine site is built by tyrosine 172 and glutamine 176. The 'KMSKS' region signature appears at 232-236 (KFGKT). Lysine 235 provides a ligand contact to ATP. The 69-residue stretch at 362-430 (ISLVDLLADA…KKSYYLIIVE (69 aa)) folds into the S4 RNA-binding domain.

Belongs to the class-I aminoacyl-tRNA synthetase family. TyrS type 1 subfamily. In terms of assembly, homodimer.

The protein resides in the cytoplasm. The enzyme catalyses tRNA(Tyr) + L-tyrosine + ATP = L-tyrosyl-tRNA(Tyr) + AMP + diphosphate + H(+). Its function is as follows. Catalyzes the attachment of tyrosine to tRNA(Tyr) in a two-step reaction: tyrosine is first activated by ATP to form Tyr-AMP and then transferred to the acceptor end of tRNA(Tyr). The protein is Tyrosine--tRNA ligase of Porphyromonas gingivalis (strain ATCC 33277 / DSM 20709 / CIP 103683 / JCM 12257 / NCTC 11834 / 2561).